The following is a 146-amino-acid chain: Hemoglobin subunit beta (146 aa).

V1 is subject to N-acetylvaline. Residues 2–146 enclose the Globin domain; sequence HLTAEEKSAV…VANALAHKYH (145 aa). Phosphoserine is present on S44. At K59 the chain carries N6-acetyllysine. H63 contributes to the heme b binding site. At K82 the chain carries N6-acetyllysine. Heme b is bound at residue H92. At C93 the chain carries S-nitrosocysteine. N6-acetyllysine is present on K144.

This sequence belongs to the globin family. As to quaternary structure, heterotetramer of two alpha chains and two beta chains. As to expression, red blood cells.

Its function is as follows. Involved in oxygen transport from the lung to the various peripheral tissues. The chain is Hemoglobin subunit beta from Tamias merriami (Merriam's chipmunk).